The sequence spans 197 residues: Transposon Tn552 resolvase (197 aa).

One can recognise a Resolvase/invertase-type recombinase catalytic domain in the interval 1-136 (MKIGYARVST…AGRIAARARG (136 aa)). Catalysis depends on S9, which acts as the O-(5'-phospho-DNA)-serine intermediate. Positions 163–182 (IKTIAEQWQVSRTTIYRYLN) form a DNA-binding region, H-T-H motif.

It belongs to the site-specific recombinase resolvase family.

Resolvase catalyzes the resolution (a site-specific recombination) of the cointegrated replicon to yield the final transposition products. This chain is Transposon Tn552 resolvase (tnpR), found in Staphylococcus aureus.